The following is a 254-amino-acid chain: Aspartate/glutamate leucyltransferase (254 aa).

This sequence belongs to the R-transferase family. Bpt subfamily.

It localises to the cytoplasm. The catalysed reaction is N-terminal L-glutamyl-[protein] + L-leucyl-tRNA(Leu) = N-terminal L-leucyl-L-glutamyl-[protein] + tRNA(Leu) + H(+). It carries out the reaction N-terminal L-aspartyl-[protein] + L-leucyl-tRNA(Leu) = N-terminal L-leucyl-L-aspartyl-[protein] + tRNA(Leu) + H(+). In terms of biological role, functions in the N-end rule pathway of protein degradation where it conjugates Leu from its aminoacyl-tRNA to the N-termini of proteins containing an N-terminal aspartate or glutamate. This Xylella fastidiosa (strain M12) protein is Aspartate/glutamate leucyltransferase.